The following is a 676-amino-acid chain: DNA ligase (676 aa).

Residues 34 to 38 (DQEFD), 83 to 84 (SL), and E117 each bind NAD(+). Catalysis depends on K119, which acts as the N6-AMP-lysine intermediate. Residues R140, E177, K285, and K309 each contribute to the NAD(+) site. C403, C406, C427, and C434 together coordinate Zn(2+). The 82-residue stretch at 595–676 (NNNGLLKNKT…EWLKMLNKSG (82 aa)) folds into the BRCT domain.

This sequence belongs to the NAD-dependent DNA ligase family. LigA subfamily. Requires Mg(2+) as cofactor. The cofactor is Mn(2+).

It carries out the reaction NAD(+) + (deoxyribonucleotide)n-3'-hydroxyl + 5'-phospho-(deoxyribonucleotide)m = (deoxyribonucleotide)n+m + AMP + beta-nicotinamide D-nucleotide.. DNA ligase that catalyzes the formation of phosphodiester linkages between 5'-phosphoryl and 3'-hydroxyl groups in double-stranded DNA using NAD as a coenzyme and as the energy source for the reaction. It is essential for DNA replication and repair of damaged DNA. This Pelagibacter ubique (strain HTCC1062) protein is DNA ligase.